Consider the following 358-residue polypeptide: Neutral protease 2 homolog MEP8 (358 aa).

A signal peptide spans 1 to 19 (MKLSSILLALAALVSPAFS). Positions 20–179 (YAISHLPRSE…EKAIKPVDKR (160 aa)) are excised as a propeptide. Cystine bridges form between Cys-186/Cys-256 and Cys-263/Cys-281. Position 305 (His-305) interacts with Zn(2+). Glu-306 is an active-site residue. Residues His-309 and Asp-320 each contribute to the Zn(2+) site.

Belongs to the peptidase M35 family. Zn(2+) serves as cofactor.

Its subcellular location is the secreted. The catalysed reaction is Preferential cleavage of bonds with hydrophobic residues in P1'. Also 3-Asn-|-Gln-4 and 8-Gly-|-Ser-9 bonds in insulin B chain.. In terms of biological role, secreted metalloproteinase that allows assimilation of proteinaceous substrates. Shows high activities on basic nuclear substrates such as histone and protamine. May be involved in virulence. The protein is Neutral protease 2 homolog MEP8 (MEP8) of Coccidioides posadasii (strain C735) (Valley fever fungus).